A 387-amino-acid chain; its full sequence is Cytochrome b (387 aa).

A run of 4 helical transmembrane segments spans residues 32–52 (FGSL…TLAM), 76–98 (WLVR…LHIG), 113–133 (VWAI…LGYV), and 179–199 (FFAL…MHLI). The heme b site is built by His82 and His96. Residues His183 and His197 each contribute to the heme b site. His202 is an a ubiquinone binding site. The next 4 helical transmembrane spans lie at 226 to 246 (YLFK…SFVF), 290 to 310 (LLGV…PITD), 322 to 342 (LSKF…KLGA), and 349 to 369 (FIEL…IIVP).

This sequence belongs to the cytochrome b family. Fungal cytochrome b-c1 complex contains 10 subunits; 3 respiratory subunits, 2 core proteins and 5 low-molecular weight proteins. Cytochrome b-c1 complex is a homodimer. Heme b serves as cofactor.

The protein localises to the mitochondrion inner membrane. Its function is as follows. Component of the ubiquinol-cytochrome c reductase complex (complex III or cytochrome b-c1 complex) that is part of the mitochondrial respiratory chain. The b-c1 complex mediates electron transfer from ubiquinol to cytochrome c. Contributes to the generation of a proton gradient across the mitochondrial membrane that is then used for ATP synthesis. This Podospora anserina (strain S / ATCC MYA-4624 / DSM 980 / FGSC 10383) (Pleurage anserina) protein is Cytochrome b (COB).